The chain runs to 385 residues: FAD-dependent monooxygenase verC2 (385 aa).

Residues Arg-27, Asp-227, and Ala-240 each contribute to the FAD site. Asn-320 is a glycosylation site (N-linked (GlcNAc...) asparagine). Residues 365–385 form a helical membrane-spanning segment; the sequence is WKTTIMFIALLTIVVLIYSFI.

Belongs to the paxM FAD-dependent monooxygenase family. FAD is required as a cofactor.

Its subcellular location is the membrane. The protein operates within secondary metabolite biosynthesis; terpenoid biosynthesis. It functions in the pathway mycotoxin biosynthesis. Its function is as follows. FAD-dependent monooxygenase; part of the gene cluster that mediates the biosynthesis of the neurotoxin verrucosidin, a methylated alpha-pyrone polyketide that inhibits oxidative phosphorylation in mitochondria and thereby causes neurological diseases. The carbon backbone of verrucosidin is synthesized by the HR-PKS verA, and further modified by the other verrucodidin cluster enzymes. The chain is FAD-dependent monooxygenase verC2 from Penicillium polonicum.